A 1488-amino-acid chain; its full sequence is Chromosome partition protein MukB (1488 aa).

Position 34–41 (G34–S41) interacts with ATP. Coiled-coil stretches lie at residues L326–Q418, L444–H472, and R509–P602. A flexible hinge region spans residues P666–R783. Coiled coils occupy residues E835 to E923, E977 to G1116, and V1209 to V1265. Positions A1049–R1074 are disordered. Residues S1051–H1065 show a composition bias toward basic and acidic residues.

It belongs to the SMC family. MukB subfamily. As to quaternary structure, homodimerization via its hinge domain. Binds to DNA via its C-terminal region. Interacts, and probably forms a ternary complex, with MukE and MukF via its C-terminal region. The complex formation is stimulated by calcium or magnesium. Interacts with tubulin-related protein FtsZ.

The protein resides in the cytoplasm. It localises to the nucleoid. Functionally, plays a central role in chromosome condensation, segregation and cell cycle progression. Functions as a homodimer, which is essential for chromosome partition. Involved in negative DNA supercoiling in vivo, and by this means organize and compact chromosomes. May achieve or facilitate chromosome segregation by condensation DNA from both sides of a centrally located replisome during cell division. The protein is Chromosome partition protein MukB of Salmonella gallinarum (strain 287/91 / NCTC 13346).